The primary structure comprises 432 residues: Adenosylmethionine-8-amino-7-oxononanoate aminotransferase (432 aa).

A substrate-binding site is contributed by Trp-52. Residue 112–113 coordinates pyridoxal 5'-phosphate; it reads GS. Tyr-144 contacts substrate. Pyridoxal 5'-phosphate is bound at residue Asp-245. Substrate-binding residues include Lys-274 and Gly-307. Position 274 is an N6-(pyridoxal phosphate)lysine (Lys-274). 308-309 provides a ligand contact to pyridoxal 5'-phosphate; the sequence is PT. Arg-391 provides a ligand contact to substrate.

Belongs to the class-III pyridoxal-phosphate-dependent aminotransferase family. BioA subfamily. As to quaternary structure, homodimer. Pyridoxal 5'-phosphate is required as a cofactor.

The protein localises to the cytoplasm. The catalysed reaction is (8S)-8-amino-7-oxononanoate + S-adenosyl-L-methionine = S-adenosyl-4-methylsulfanyl-2-oxobutanoate + (7R,8S)-7,8-diammoniononanoate. It functions in the pathway cofactor biosynthesis; biotin biosynthesis; 7,8-diaminononanoate from 8-amino-7-oxononanoate (SAM route): step 1/1. Catalyzes the transfer of the alpha-amino group from S-adenosyl-L-methionine (SAM) to 7-keto-8-aminopelargonic acid (KAPA) to form 7,8-diaminopelargonic acid (DAPA). It is the only aminotransferase known to utilize SAM as an amino donor. This Buchnera aphidicola subsp. Schizaphis graminum (strain Sg) protein is Adenosylmethionine-8-amino-7-oxononanoate aminotransferase.